We begin with the raw amino-acid sequence, 131 residues long: Leptin receptor gene-related protein (131 aa).

Transmembrane regions (helical) follow at residues 7-27 (LVAL…GCAL), 32-52 (VYWP…HFIA), 69-89 (LAYF…VILA), and 100-120 (GLVL…FLIF).

It belongs to the OB-RGRP/VPS55 family. Interacts with LEPR. Interacts with RAB13. Expressed at the highest levels in heart and placenta and at a lesser extent in lung, liver, skeletal muscle, kidney and pancreas.

The protein resides in the golgi apparatus membrane. Its subcellular location is the endosome membrane. Its function is as follows. Negatively regulates leptin receptor (LEPR) cell surface expression, and thus decreases response to leptin. Negatively regulates growth hormone (GH) receptor cell surface expression in liver. May play a role in liver resistance to GH during periods of reduced nutrient availability. The chain is Leptin receptor gene-related protein (LEPROT) from Homo sapiens (Human).